Here is a 105-residue protein sequence, read N- to C-terminus: Large ribosomal subunit protein uL24 (105 aa).

It belongs to the universal ribosomal protein uL24 family. Part of the 50S ribosomal subunit.

Functionally, one of two assembly initiator proteins, it binds directly to the 5'-end of the 23S rRNA, where it nucleates assembly of the 50S subunit. Its function is as follows. One of the proteins that surrounds the polypeptide exit tunnel on the outside of the subunit. The sequence is that of Large ribosomal subunit protein uL24 from Clostridium novyi (strain NT).